The sequence spans 167 residues: Dual specificity protein phosphatase 1B (167 aa).

In terms of domain architecture, Tyrosine-protein phosphatase spans 24–165 (DLSEIQQGLF…LQQFEKSIQG (142 aa)). Catalysis depends on C109, which acts as the Phosphocysteine intermediate.

Belongs to the protein-tyrosine phosphatase family. Non-receptor class dual specificity subfamily. In terms of assembly, associates with MPK3 and MPK6. Interacts with MPK6 is promoted during HR-like responses triggered by fungal elicitors, whereas interaction with MPK3 in repressed. In terms of tissue distribution, expressed in flowers, seedlings, roots, leaves, and seeds. Present in stomata and meristematic cells.

The protein resides in the nucleus. It localises to the cytoplasm. The enzyme catalyses O-phospho-L-tyrosyl-[protein] + H2O = L-tyrosyl-[protein] + phosphate. It carries out the reaction O-phospho-L-seryl-[protein] + H2O = L-seryl-[protein] + phosphate. It catalyses the reaction O-phospho-L-threonyl-[protein] + H2O = L-threonyl-[protein] + phosphate. Has a dual specificity toward Ser/Thr and Tyr-containing proteins. Prevents biotic and abiotic stress responses, including ozone, oxidative stress and pathogen attacks; represses MAPK activities during hypersensitive response to limit the spread of the HR response after infection by necrotrophic pathogen such as Botrytis cinerea. May be also involved in ABA and salt responses. Dephosphorylates MPK3 and MPK6. The protein is Dual specificity protein phosphatase 1B (DSPTP1B) of Arabidopsis thaliana (Mouse-ear cress).